A 93-amino-acid chain; its full sequence is Em protein H5 (93 aa).

The segment at 1–93 (MASGQQERSE…IDESKFKTKS (93 aa)) is disordered. 3 stretches are compositionally biased toward basic and acidic residues: residues 7–19 (ERSE…REGE), 32–62 (EAQE…EMGR), and 73–93 (GGER…KTKS).

This sequence belongs to the small hydrophilic plant seed protein family.

Functionally, it is thought to provide protection for the cytoplasm during the desiccation stage of embryo development. The sequence is that of Em protein H5 (EMH5) from Triticum aestivum (Wheat).